We begin with the raw amino-acid sequence, 364 residues long: Chorismate synthase (364 aa).

Arginine 47 contributes to the NADP(+) binding site. Residues 124 to 126 (RGS), 240 to 241 (NA), glycine 284, 299 to 303 (KPTPS), and arginine 326 each bind FMN.

Belongs to the chorismate synthase family. The cofactor is FMNH2.

It carries out the reaction 5-O-(1-carboxyvinyl)-3-phosphoshikimate = chorismate + phosphate. Its pathway is metabolic intermediate biosynthesis; chorismate biosynthesis; chorismate from D-erythrose 4-phosphate and phosphoenolpyruvate: step 7/7. Functionally, catalyzes the anti-1,4-elimination of the C-3 phosphate and the C-6 proR hydrogen from 5-enolpyruvylshikimate-3-phosphate (EPSP) to yield chorismate, which is the branch point compound that serves as the starting substrate for the three terminal pathways of aromatic amino acid biosynthesis. This reaction introduces a second double bond into the aromatic ring system. The polypeptide is Chorismate synthase (Methanobrevibacter smithii (strain ATCC 35061 / DSM 861 / OCM 144 / PS)).